A 132-amino-acid polypeptide reads, in one-letter code: Large ribosomal subunit protein uL14 (132 aa).

It belongs to the universal ribosomal protein uL14 family. As to quaternary structure, part of the 50S ribosomal subunit. Forms a cluster with proteins L3 and L24e, part of which may contact the 16S rRNA in 2 intersubunit bridges.

Functionally, binds to 23S rRNA. Forms part of two intersubunit bridges in the 70S ribosome. The sequence is that of Large ribosomal subunit protein uL14 from Archaeoglobus fulgidus (strain ATCC 49558 / DSM 4304 / JCM 9628 / NBRC 100126 / VC-16).